The chain runs to 362 residues: Histidinol-phosphate aminotransferase (362 aa).

K219 carries the N6-(pyridoxal phosphate)lysine modification.

It belongs to the class-II pyridoxal-phosphate-dependent aminotransferase family. Histidinol-phosphate aminotransferase subfamily. In terms of assembly, homodimer. The cofactor is pyridoxal 5'-phosphate.

It catalyses the reaction L-histidinol phosphate + 2-oxoglutarate = 3-(imidazol-4-yl)-2-oxopropyl phosphate + L-glutamate. Its pathway is amino-acid biosynthesis; L-histidine biosynthesis; L-histidine from 5-phospho-alpha-D-ribose 1-diphosphate: step 7/9. The polypeptide is Histidinol-phosphate aminotransferase (Maricaulis maris (strain MCS10) (Caulobacter maris)).